The primary structure comprises 176 residues: N5-carboxyaminoimidazole ribonucleotide mutase (176 aa).

Residues Ser14, Asp17, and Arg44 each coordinate substrate.

The protein belongs to the AIR carboxylase family. Class I subfamily.

The catalysed reaction is 5-carboxyamino-1-(5-phospho-D-ribosyl)imidazole + H(+) = 5-amino-1-(5-phospho-D-ribosyl)imidazole-4-carboxylate. It participates in purine metabolism; IMP biosynthesis via de novo pathway; 5-amino-1-(5-phospho-D-ribosyl)imidazole-4-carboxylate from 5-amino-1-(5-phospho-D-ribosyl)imidazole (N5-CAIR route): step 2/2. In terms of biological role, catalyzes the conversion of N5-carboxyaminoimidazole ribonucleotide (N5-CAIR) to 4-carboxy-5-aminoimidazole ribonucleotide (CAIR). In Synechocystis sp. (strain ATCC 27184 / PCC 6803 / Kazusa), this protein is N5-carboxyaminoimidazole ribonucleotide mutase.